We begin with the raw amino-acid sequence, 415 residues long: Gamma-glutamyl phosphate reductase 1 (415 aa).

Belongs to the gamma-glutamyl phosphate reductase family.

Its subcellular location is the cytoplasm. It catalyses the reaction L-glutamate 5-semialdehyde + phosphate + NADP(+) = L-glutamyl 5-phosphate + NADPH + H(+). It participates in amino-acid biosynthesis; L-proline biosynthesis; L-glutamate 5-semialdehyde from L-glutamate: step 2/2. Functionally, catalyzes the NADPH-dependent reduction of L-glutamate 5-phosphate into L-glutamate 5-semialdehyde and phosphate. The product spontaneously undergoes cyclization to form 1-pyrroline-5-carboxylate. This is Gamma-glutamyl phosphate reductase 1 from Bacillus licheniformis (strain ATCC 14580 / DSM 13 / JCM 2505 / CCUG 7422 / NBRC 12200 / NCIMB 9375 / NCTC 10341 / NRRL NRS-1264 / Gibson 46).